Here is a 100-residue protein sequence, read N- to C-terminus: Small ribosomal subunit protein bS6 (100 aa).

Belongs to the bacterial ribosomal protein bS6 family.

In terms of biological role, binds together with bS18 to 16S ribosomal RNA. This chain is Small ribosomal subunit protein bS6, found in Enterococcus faecalis (strain ATCC 700802 / V583).